The primary structure comprises 580 residues: Methyl-CpG-binding domain protein 4 (580 aa).

The tract at residues 1–36 (MGTTGLESLSLGDRGAAPTVTSSERLVPDPPNDLRK) is disordered. Residues 76 to 148 (ATAGTECRKS…EDFDFTVLSK (73 aa)) form the MBD domain. Phosphoserine occurs at positions 318 and 428. The active site involves D560.

Interacts with MLH1.

It is found in the nucleus. Functionally, mismatch-specific DNA N-glycosylase involved in DNA repair. Has thymine glycosylase activity and is specific for G:T mismatches within methylated and unmethylated CpG sites. Can also remove uracil or 5-fluorouracil in G:U mismatches. Has no lyase activity. Was first identified as methyl-CpG-binding protein. In Homo sapiens (Human), this protein is Methyl-CpG-binding domain protein 4.